Here is a 930-residue protein sequence, read N- to C-terminus: Protein translocase subunit SecA (930 aa).

ATP is bound by residues Q87, G105–T109, and D515. Zn(2+)-binding residues include C914, C916, C925, and H926.

It belongs to the SecA family. In terms of assembly, monomer and homodimer. Part of the essential Sec protein translocation apparatus which comprises SecA, SecYEG and auxiliary proteins SecDF-YajC and YidC. Zn(2+) serves as cofactor.

The protein localises to the cell inner membrane. Its subcellular location is the cytoplasm. It carries out the reaction ATP + H2O + cellular proteinSide 1 = ADP + phosphate + cellular proteinSide 2.. Functionally, part of the Sec protein translocase complex. Interacts with the SecYEG preprotein conducting channel. Has a central role in coupling the hydrolysis of ATP to the transfer of proteins into and across the cell membrane, serving both as a receptor for the preprotein-SecB complex and as an ATP-driven molecular motor driving the stepwise translocation of polypeptide chains across the membrane. The sequence is that of Protein translocase subunit SecA from Burkholderia thailandensis (strain ATCC 700388 / DSM 13276 / CCUG 48851 / CIP 106301 / E264).